A 147-amino-acid polypeptide reads, in one-letter code: uncharacterized protein (147 aa).

A helical membrane pass occupies residues 71 to 91 (IDILAFVAGTVGVGSLVLLQF).

The protein resides in the virion. It localises to the host membrane. This is an uncharacterized protein from Acanthamoeba polyphaga mimivirus (APMV).